The chain runs to 273 residues: Glucosamine-6-phosphate deaminase (273 aa).

Asp-72 acts as the Proton acceptor; for enolization step in catalysis. The For ring-opening step role is filled by Asp-141. The active-site Proton acceptor; for ring-opening step is the His-143. The For ring-opening step role is filled by Glu-148.

This sequence belongs to the glucosamine/galactosamine-6-phosphate isomerase family. In terms of assembly, homohexamer.

Its subcellular location is the cytoplasm. The catalysed reaction is alpha-D-glucosamine 6-phosphate + H2O = beta-D-fructose 6-phosphate + NH4(+). It functions in the pathway nucleotide-sugar biosynthesis; UDP-N-acetyl-alpha-D-glucosamine biosynthesis; alpha-D-glucosamine 6-phosphate from D-fructose 6-phosphate: step 1/1. Its function is as follows. Catalyzes the reversible conversion of alpha-D-glucosamine 6-phosphate (GlcN-6P) into beta-D-fructose 6-phosphate (Fru-6P) and ammonium ion, a regulatory reaction step in de novo uridine diphosphate-N-acetyl-alpha-D-glucosamine (UDP-GlcNAc) biosynthesis via hexosamine pathway. This chain is Glucosamine-6-phosphate deaminase (Gnpda1), found in Anopheles gambiae (African malaria mosquito).